The sequence spans 793 residues: MQDGNFLLSALQPEAGVCSLALPSDLQLDRRGAEGPEAERLRAARVQEQVRARLLQLGQQPRHNGPAEPDGAAEAARGASRAQYHTLQAGFSSRSQGLGGETSTFRPIAKPTYSPASWSSRSAVDLSSSRRLSSVHNGGGAFGAAGYRGAPPTAPVPARPVSFHERGGAGSRADYDTLSLRSLRLGAGGPDDRYSVVSEQLEPAATSSYRAFAYERRASSSSSRAGGLDWPEATEGPPSRTIRAPAMRTLQRFQSSHRSRGVAAGGPGGVLEPVTRAPSVRSLSLGDSGHLPDMRGLDSYGGHRTLQRLSSGFDDIDLPSAVKYLMASDPNLQVLGAAYIQHKCYSDAAAKKQARSLQAVPRLVKLFNHANQEVQRHATGAMRNLVYDNADNKLALVEENGIFELLRALREQDDELRKNVTGILWNLSSSDHLKDRLARDTLEQLTDLVLSPLSGAGGPPLIQQNASEAEIFYNATGFLRNLSSASQATRQKMRECHGLVDALVTYINHALDVGKCEDKSVENAVCVLRNLSYRLYDEMPPSALQRLEGRGRQDMGVPPGEAVGCFTPQSRRLRELPLTADALTFAEVSKDPKGLEWLWSPQIVGLYNRLLQRCELNRHTTEAAAGALQNITAGDRRWAGVLSRLALEQERILNPLLDRVRTADHHQLRSLTGLIRNLSRNARNKDEMSTKLVSHLIEKLPGSVGEKSPPADVLINIIAVLNNLVVASPVAARDLLYFDGLRKLVFIKKKRDSPDSEKSSRAASSLLANLWQYNKLHRDFRAKGYRKEDFLGP.

The disordered stretch occupies residues 56-82 (QLGQQPRHNGPAEPDGAAEAARGASRA). The span at 66-82 (PAEPDGAAEAARGASRA) shows a compositional bias: low complexity. The residue at position 81 (Arg-81) is an Omega-N-methylarginine. Ser-122, Ser-179, and Ser-182 each carry phosphoserine. Tyr-194 is subject to Phosphotyrosine. The segment at 221–240 (SSSRAGGLDWPEATEGPPSR) is disordered. Ser-239 bears the Phosphoserine mark. Thr-249 is modified (phosphothreonine). Arg-260 carries the omega-N-methylarginine modification. A phosphoserine mark is found at Ser-282, Ser-310, Ser-311, and Ser-328. The tract at residues 282–285 (SLSL) is required for interaction with SFN. The required for interaction with GSK3B stretch occupies residues 291 to 720 (LPDMRGLDSY…ADVLINIIAV (430 aa)). ARM repeat units follow at residues 302-345 (GHRT…HKCY), 348-387 (AAAK…NLVY), 390-429 (ADNK…NLSS), 446-484 (TDLV…NLSS), 488-533 (ATRQ…NLSY), 592-633 (PKGL…NITA), 641-680 (VLSR…NLSR), and 685-726 (KDEM…NLVV). Residues 513–793 (VGKCEDKSVE…GYRKEDFLGP (281 aa)) form a required for binding to PKP2 mRNA region.

This sequence belongs to the beta-catenin family. In terms of assembly, found in a complex composed of CDH1, RAP1A and PKP3; PKP3 acts as a scaffold protein within the complex, the complex is required for CDH1 localization to mature desmosome cell junctions. Interacts with FXR1; the interaction facilitates the binding of PKP3 to PKP2 mRNA. Interacts (via ARM repeats) with GSK3B; the interaction may be involved in PKP3 protein degradation. Interacts with hyperphosphorylated and hypophosphorylated RB1; the interaction inhibits RB1 interaction with and repression of the transcription factor E2F1, potentially via sequestering RB1 to the cytoplasm. Interacts with CDKN1A; the interaction sequesters CDKN1A to the cytoplasm thereby repressing its role as an inhibitor of CDK4- and CDK6-driven RB1 phosphorylation. Interacts (via N-terminus) with SFN; the interaction maintains the cytoplasmic pool of PKP3, facilitates PKP3 exchange at desmosomes and restricts PKP3 localization to existing desmosome cell junctions. Interacts (via N-terminus) with SFN; the interaction maintains the cytoplasmic pool of PKP3 and restricts PKP3 localization to existing desmosome cell junctions. Interacts (via N-terminus) with JUP; the interaction is required for PKP3 localization to desmosome cell-cell junctions. In terms of processing, phosphorylated at Ser-282 when localized to the cytoplasm, PKP3 at desmosome cell junctions is not phosphorylated. Phosphorylation at Try-194 by SRC is induced by reactive oxygen species and potentially acts as a release mechanism from desmosome cell-cell junctions.

It localises to the nucleus. The protein localises to the cell junction. The protein resides in the desmosome. Its subcellular location is the cytoplasm. It is found in the cell membrane. It localises to the adherens junction. Functionally, a component of desmosome cell-cell junctions which are required for positive regulation of cellular adhesion. Required for the localization of DSG2, DSP and PKP2 to mature desmosome junctions. May also play a role in the maintenance of DSG3 protein abundance in keratinocytes. Required for the formation of DSP-containing desmosome precursors in the cytoplasm during desmosome assembly. Also regulates the accumulation of CDH1 to mature desmosome junctions, via cAMP-dependent signaling and its interaction with activated RAP1A. Positively regulates the stabilization of PKP2 mRNA and therefore protein abundance, via its interaction with FXR1, may also regulate the protein abundance of DSP via the same mechanism. May also regulate the protein abundance of the desmosome component PKP1. Required for the organization of desmosome junctions at intercellular borders between basal keratinocytes of the epidermis, as a result plays a role in maintenance of the dermal barrier and regulation of the dermal inflammatory response. Required during epidermal keratinocyte differentiation for cell adherence at tricellular cell-cell contacts, via regulation of the timely formation of adherens junctions and desmosomes in a calcium-dependent manner, and may also play a role in the organization of the intracellular actin fiber belt. Acts as a negative regulator of the inflammatory response in hematopoietic cells of the skin and intestine, via modulation of proinflammatory cytokine production. Important for epithelial barrier maintenance in the intestine to reduce intestinal permeability, thereby plays a role in protection from intestinal-derived endotoxemia. Required for the development of hair follicles, via a role in the regulation of inner root sheaf length, correct alignment and anterior-posterior polarity of hair follicles. Promotes proliferation and cell-cycle G1/S phase transition of keratinocytes. Promotes E2F1-driven transcription of G1/S phase promoting genes by acting to release E2F1 from its inhibitory interaction with RB1, via sequestering RB1 and CDKN1A to the cytoplasm and thereby increasing CDK4- and CDK6-driven phosphorylation of RB1. May act as a scaffold protein to facilitate MAPK phosphorylation of RPS6KA protein family members and subsequently promote downstream EGFR signaling. May play a role in the positive regulation of transcription of Wnt-mediated TCF-responsive target genes. This is Plakophilin-3 (PKP3) from Bos taurus (Bovine).